Here is a 252-residue protein sequence, read N- to C-terminus: 3-deoxy-manno-octulosonate cytidylyltransferase (252 aa).

Belongs to the KdsB family.

The protein localises to the cytoplasm. The catalysed reaction is 3-deoxy-alpha-D-manno-oct-2-ulosonate + CTP = CMP-3-deoxy-beta-D-manno-octulosonate + diphosphate. It functions in the pathway nucleotide-sugar biosynthesis; CMP-3-deoxy-D-manno-octulosonate biosynthesis; CMP-3-deoxy-D-manno-octulosonate from 3-deoxy-D-manno-octulosonate and CTP: step 1/1. Its pathway is bacterial outer membrane biogenesis; lipopolysaccharide biosynthesis. Its function is as follows. Activates KDO (a required 8-carbon sugar) for incorporation into bacterial lipopolysaccharide in Gram-negative bacteria. The sequence is that of 3-deoxy-manno-octulosonate cytidylyltransferase from Rhodospirillum rubrum (strain ATCC 11170 / ATH 1.1.1 / DSM 467 / LMG 4362 / NCIMB 8255 / S1).